A 615-amino-acid chain; its full sequence is 1-deoxy-D-xylulose-5-phosphate synthase (615 aa).

Thiamine diphosphate contacts are provided by residues H76 and 117 to 119 (GHS). D148 is a Mg(2+) binding site. Residues 149 to 150 (GA), N177, Y284, and E365 each bind thiamine diphosphate. N177 is a binding site for Mg(2+).

Belongs to the transketolase family. DXPS subfamily. Homodimer. Mg(2+) is required as a cofactor. Thiamine diphosphate serves as cofactor.

The enzyme catalyses D-glyceraldehyde 3-phosphate + pyruvate + H(+) = 1-deoxy-D-xylulose 5-phosphate + CO2. It functions in the pathway metabolic intermediate biosynthesis; 1-deoxy-D-xylulose 5-phosphate biosynthesis; 1-deoxy-D-xylulose 5-phosphate from D-glyceraldehyde 3-phosphate and pyruvate: step 1/1. Its function is as follows. Catalyzes the acyloin condensation reaction between C atoms 2 and 3 of pyruvate and glyceraldehyde 3-phosphate to yield 1-deoxy-D-xylulose-5-phosphate (DXP). This chain is 1-deoxy-D-xylulose-5-phosphate synthase, found in Francisella tularensis subsp. mediasiatica (strain FSC147).